A 127-amino-acid chain; its full sequence is Glycine cleavage system H protein (127 aa).

Residues 22–104 form the Lipoyl-binding domain; the sequence is AVVIGITHFA…YEGAWMVKVE (83 aa). The residue at position 63 (lysine 63) is an N6-lipoyllysine.

It belongs to the GcvH family. The glycine cleavage system is composed of four proteins: P, T, L and H. It depends on (R)-lipoate as a cofactor.

Its function is as follows. The glycine cleavage system catalyzes the degradation of glycine. The H protein shuttles the methylamine group of glycine from the P protein to the T protein. In terms of biological role, is also involved in protein lipoylation via its role as an octanoyl/lipoyl carrier protein intermediate. The sequence is that of Glycine cleavage system H protein from Bacillus mycoides (strain KBAB4) (Bacillus weihenstephanensis).